The primary structure comprises 398 residues: Cytochrome b561 and DOMON domain-containing protein At3g61750 (398 aa).

Positions 1-23 are cleaved as a signal peptide; sequence MKTLVGFYILCFLIGQDLPFLAA. The 114-residue stretch at 64 to 177 folds into the DOMON domain; that stretch reads NTFVLRYSEN…PRRAVILAFS (114 aa). Residues 184–377 enclose the Cytochrome b561 domain; sequence LGRLTKHDDK…LEIFRIRGTI (194 aa). Histidine 220 contributes to the heme b binding site. 2 consecutive transmembrane segments (helical) span residues 222–242 and 252–272; these read VMAI…ARYL and LHIG…ILGI. The heme b site is built by histidine 253 and histidine 285. 3 consecutive transmembrane segments (helical) span residues 287-307, 320-340, and 351-371; these read GIGI…FARP, YHHW…VLGI, and KIGY…LEIF. Histidine 321 is a heme b binding site.

Heme b is required as a cofactor.

It is found in the membrane. Its function is as follows. May act as a catecholamine-responsive trans-membrane electron transporter. This is Cytochrome b561 and DOMON domain-containing protein At3g61750 from Arabidopsis thaliana (Mouse-ear cress).